An 80-amino-acid chain; its full sequence is MRLVVCLVYLVSFALVCQGQGFKGGYTGSYSRAPPYGSRGPISTHPISRPATGCTSCHTITFDKAACCRLFGRCCSALKG.

Positions 1–19 are cleaved as a signal peptide; it reads MRLVVCLVYLVSFALVCQG. At Gln-20 the chain carries Pyrrolidone carboxylic acid. 3 disulfide bridges follow: Cys-54-Cys-67, Cys-57-Cys-74, and Cys-68-Cys-75.

It belongs to the penaeidin family. Post-translationally, the N-terminus forms pyrrolidone carboxylic acid. As to expression, strongly expressed in hemocytes, and to a lesser extent in heart, muscle, gills, intestine and eyestalk. Lowest expression in hepatopancreas.

The protein localises to the cytoplasmic granule. Its function is as follows. Antibacterial and antifungal activity. Presents chitin-binding activity. The chain is Penaeidin-3 from Penaeus indicus (Indian white prawn).